Here is a 510-residue protein sequence, read N- to C-terminus: 2,3-bisphosphoglycerate-independent phosphoglycerate mutase (510 aa).

The Mn(2+) site is built by aspartate 12 and serine 62. The active-site Phosphoserine intermediate is serine 62. Substrate contacts are provided by residues histidine 123, 153–154, arginine 185, arginine 191, 261–264, and lysine 336; these read RD and RPDR. Aspartate 403, histidine 407, aspartate 444, histidine 445, and histidine 462 together coordinate Mn(2+).

The protein belongs to the BPG-independent phosphoglycerate mutase family. Monomer. The cofactor is Mn(2+).

The enzyme catalyses (2R)-2-phosphoglycerate = (2R)-3-phosphoglycerate. It participates in carbohydrate degradation; glycolysis; pyruvate from D-glyceraldehyde 3-phosphate: step 3/5. In terms of biological role, essential for rapid growth and for sporulation. Catalyzes the interconversion of 2-phosphoglycerate and 3-phosphoglycerate. This is 2,3-bisphosphoglycerate-independent phosphoglycerate mutase from Priestia megaterium (strain ATCC 12872 / QMB1551) (Bacillus megaterium).